The following is a 735-amino-acid chain: Diacylglycerol kinase alpha (735 aa).

EF-hand domains follow at residues 110 to 145 (RPED…MMRV) and 155 to 190 (ELRP…TVPL). Positions 123, 125, 127, 134, 168, 170, 172, 174, and 179 each coordinate Ca(2+). Phorbol-ester/DAG-type zinc fingers lie at residues 205-253 (QHMW…ALPC) and 269-319 (SHVW…GHEC). One can recognise a DAGKc domain in the interval 372 to 506 (PNTHPLLVFV…MDRWSVEVIP (135 aa)). The residue at position 484 (K484) is an N6-acetyllysine.

This sequence belongs to the eukaryotic diacylglycerol kinase family. In terms of assembly, monomer. Expressed in lymphocytes.

The protein localises to the cytoplasm. The protein resides in the cytosol. It carries out the reaction a 1,2-diacyl-sn-glycerol + ATP = a 1,2-diacyl-sn-glycero-3-phosphate + ADP + H(+). The catalysed reaction is a 1-O-alkyl-sn-glycerol + ATP = a 1-O-alkyl-sn-glycero-3-phosphate + ADP + H(+). The enzyme catalyses 1-O-alkyl-2-acyl-sn-glycerol + ATP = 1-O-alkyl-2-acyl-sn-glycero-3-phosphate + ADP + H(+). It catalyses the reaction 1,2-dihexadecanoyl-sn-glycerol + ATP = 1,2-dihexadecanoyl-sn-glycero-3-phosphate + ADP + H(+). It carries out the reaction 1-hexadecanoyl-2-(9Z-octadecenoyl)-sn-glycerol + ATP = 1-hexadecanoyl-2-(9Z-octadecenoyl)-sn-glycero-3-phosphate + ADP + H(+). The catalysed reaction is 2-(9Z-octadecenoyl)-glycerol + ATP = 2-(9Z-octadecenoyl)-sn-glycero-3-phosphate + ADP + H(+). The enzyme catalyses 1,2-di-(9Z-octadecenoyl)-sn-glycerol + ATP = 1,2-di-(9Z-octadecenoyl)-sn-glycero-3-phosphate + ADP + H(+). It catalyses the reaction 1-octadecanoyl-2-(5Z,8Z,11Z,14Z-eicosatetraenoyl)-sn-glycerol + ATP = 1-octadecanoyl-2-(5Z,8Z,11Z,14Z-eicosatetraenoyl)-sn-glycero-3-phosphate + ADP + H(+). It carries out the reaction 1,2-didecanoyl-sn-glycerol + ATP = 1,2-didecanoyl-sn-glycero-3-phosphate + ADP + H(+). The catalysed reaction is 1-O-hexadecyl-2-acetyl-sn-glycerol + ATP = 1-O-hexadecyl-2-acetyl-sn-glycero-3-phosphate + ADP + H(+). The enzyme catalyses 1-O-hexadecyl-2-(5Z,8Z,11Z,14Z-eicosatetraenoyl)-sn-glycerol + ATP = 1-O-hexadecyl-2-(5Z,8Z,11Z,14Z-eicosatetraenoyl)-sn-glycero-3-phosphate + ADP + H(+). It catalyses the reaction 1-O-hexadecyl-2-(9Z-octadecenoyl)-sn-glycerol + ATP = 1-O-hexadecyl-2-(9Z-octadecenoyl)-sn-glycero-3-phosphate + ADP + H(+). It carries out the reaction 1-O-hexadecyl-sn-glycerol + ATP = 1-O-hexadecyl-sn-glycero-3-phosphate + ADP + H(+). The protein operates within lipid metabolism; glycerolipid metabolism. With respect to regulation, stimulated by calcium and phosphatidylserine. In terms of biological role, diacylglycerol kinase that converts diacylglycerol/DAG into phosphatidic acid/phosphatidate/PA and regulates the respective levels of these two bioactive lipids. Thereby, acts as a central switch between the signaling pathways activated by these second messengers with different cellular targets and opposite effects in numerous biological processes. Also plays an important role in the biosynthesis of complex lipids. Can also phosphorylate 1-alkyl-2-acylglycerol in vitro as efficiently as diacylglycerol provided it contains an arachidonoyl group. Also involved in the production of alkyl-lysophosphatidic acid, another bioactive lipid, through the phosphorylation of 1-alkyl-2-acetyl glycerol. The protein is Diacylglycerol kinase alpha (DGKA) of Homo sapiens (Human).